The following is a 279-amino-acid chain: Acetyl-coenzyme A carboxylase carboxyl transferase subunit beta (279 aa).

A CoA carboxyltransferase N-terminal domain is found at leucine 23–valine 279. Residues cysteine 27, cysteine 30, cysteine 46, and cysteine 49 each contribute to the Zn(2+) site. The C4-type zinc-finger motif lies at cysteine 27–cysteine 49.

Belongs to the AccD/PCCB family. As to quaternary structure, acetyl-CoA carboxylase is a heterohexamer composed of biotin carboxyl carrier protein (AccB), biotin carboxylase (AccC) and two subunits each of ACCase subunit alpha (AccA) and ACCase subunit beta (AccD). Requires Zn(2+) as cofactor.

It localises to the cytoplasm. It carries out the reaction N(6)-carboxybiotinyl-L-lysyl-[protein] + acetyl-CoA = N(6)-biotinyl-L-lysyl-[protein] + malonyl-CoA. The protein operates within lipid metabolism; malonyl-CoA biosynthesis; malonyl-CoA from acetyl-CoA: step 1/1. In terms of biological role, component of the acetyl coenzyme A carboxylase (ACC) complex. Biotin carboxylase (BC) catalyzes the carboxylation of biotin on its carrier protein (BCCP) and then the CO(2) group is transferred by the transcarboxylase to acetyl-CoA to form malonyl-CoA. This chain is Acetyl-coenzyme A carboxylase carboxyl transferase subunit beta, found in Chlorobium limicola (strain DSM 245 / NBRC 103803 / 6330).